Reading from the N-terminus, the 450-residue chain is Phosphoglucosamine mutase (450 aa).

The active-site Phosphoserine intermediate is serine 102. Serine 102, aspartate 244, aspartate 246, and aspartate 248 together coordinate Mg(2+). Serine 102 is subject to Phosphoserine.

It belongs to the phosphohexose mutase family. Mg(2+) is required as a cofactor. Activated by phosphorylation.

It carries out the reaction alpha-D-glucosamine 1-phosphate = D-glucosamine 6-phosphate. Catalyzes the conversion of glucosamine-6-phosphate to glucosamine-1-phosphate. This chain is Phosphoglucosamine mutase, found in Nitratidesulfovibrio vulgaris (strain DSM 19637 / Miyazaki F) (Desulfovibrio vulgaris).